Consider the following 217-residue polypeptide: MSSKVSRDTLYEAVREVLHGNQRKRRKFLETVELQISLKNYDPQKDKRFSGTVRLKSTPRPKFSVCVLGDQQHCDEAKAVDIPHMDIEALKKLNKNKKLVKKLAKKYDAFLASESLIKQIPRILGPGLNKAGKFPSPLTHNENMVAKVDEVKSTIKFQMKRVLCLAVAVGHVKMTDDELVYNIHLAVNFLVSLLKKNWQNVRALYIKSTMGKPQRLY.

N-acetylserine is present on Ser2. Tyr11 is subject to Phosphotyrosine. An N6-acetyllysine mark is found at Lys91 and Lys106. Position 118 is an N6-acetyllysine; alternate (Lys118). Lys118 is covalently cross-linked (Glycyl lysine isopeptide (Lys-Gly) (interchain with G-Cter in SUMO1); alternate). Residue Lys118 forms a Glycyl lysine isopeptide (Lys-Gly) (interchain with G-Cter in SUMO2); alternate linkage.

This sequence belongs to the universal ribosomal protein uL1 family. As to quaternary structure, component of the large ribosomal subunit.

It is found in the cytoplasm. Its function is as follows. Component of the large ribosomal subunit. The ribosome is a large ribonucleoprotein complex responsible for the synthesis of proteins in the cell. In Macaca fascicularis (Crab-eating macaque), this protein is Large ribosomal subunit protein uL1 (RPL10A).